A 217-amino-acid polypeptide reads, in one-letter code: Protein LURP-one-related 15 (217 aa).

An N-acetylmethionine modification is found at methionine 1.

Belongs to the LOR family.

Its function is as follows. Might be related to the phospholipid scramblase and tubby-like superfamily of membrane tethered transcription factors. The chain is Protein LURP-one-related 15 from Arabidopsis thaliana (Mouse-ear cress).